The following is a 245-amino-acid chain: 1-(5-phosphoribosyl)-5-[(5-phosphoribosylamino)methylideneamino] imidazole-4-carboxamide isomerase (245 aa).

Aspartate 7 functions as the Proton acceptor in the catalytic mechanism. Aspartate 129 serves as the catalytic Proton donor.

Belongs to the HisA/HisF family.

Its subcellular location is the cytoplasm. It catalyses the reaction 1-(5-phospho-beta-D-ribosyl)-5-[(5-phospho-beta-D-ribosylamino)methylideneamino]imidazole-4-carboxamide = 5-[(5-phospho-1-deoxy-D-ribulos-1-ylimino)methylamino]-1-(5-phospho-beta-D-ribosyl)imidazole-4-carboxamide. It functions in the pathway amino-acid biosynthesis; L-histidine biosynthesis; L-histidine from 5-phospho-alpha-D-ribose 1-diphosphate: step 4/9. The protein is 1-(5-phosphoribosyl)-5-[(5-phosphoribosylamino)methylideneamino] imidazole-4-carboxamide isomerase of Escherichia coli O45:K1 (strain S88 / ExPEC).